The primary structure comprises 223 residues: MDKQNVPVITLDGPSASGKGTIARLVSQALGFHYLDSGALYRLVALAAMKRNTDVSDEHSMVDIARHLNVSFRDSSIWLEGKDVSDEVRAEACGEYASRIAQYSALRVELLGYQRDFRKSPGLVTDGRDMGSVIFPDATLKIYLTASEEERALRRHKQLMEKGINASIADLIQALRARDERDSSRSTSPLQQCEDACLLDTTGLSIDQVVSRVLNMYAEARKA.

13-21 (GPSASGKGT) is a binding site for ATP.

It belongs to the cytidylate kinase family. Type 1 subfamily.

Its subcellular location is the cytoplasm. It catalyses the reaction CMP + ATP = CDP + ADP. The enzyme catalyses dCMP + ATP = dCDP + ADP. The sequence is that of Cytidylate kinase from Nitrosomonas europaea (strain ATCC 19718 / CIP 103999 / KCTC 2705 / NBRC 14298).